The chain runs to 278 residues: 4-diphosphocytidyl-2-C-methyl-D-erythritol kinase (278 aa).

Lys9 is a catalytic residue. ATP is bound at residue 89-99; that stretch reads PVASGIGGGSA. Asp128 is a catalytic residue.

Belongs to the GHMP kinase family. IspE subfamily.

The catalysed reaction is 4-CDP-2-C-methyl-D-erythritol + ATP = 4-CDP-2-C-methyl-D-erythritol 2-phosphate + ADP + H(+). It participates in isoprenoid biosynthesis; isopentenyl diphosphate biosynthesis via DXP pathway; isopentenyl diphosphate from 1-deoxy-D-xylulose 5-phosphate: step 3/6. Catalyzes the phosphorylation of the position 2 hydroxy group of 4-diphosphocytidyl-2C-methyl-D-erythritol. In Cereibacter sphaeroides (strain ATCC 17029 / ATH 2.4.9) (Rhodobacter sphaeroides), this protein is 4-diphosphocytidyl-2-C-methyl-D-erythritol kinase.